The chain runs to 428 residues: Somatostatin receptor type 3 (428 aa).

Residues 1–12 show a composition bias toward polar residues; that stretch reads MATVTYPSSEPT. The interval 1–20 is disordered; that stretch reads MATVTYPSSEPTTLDPGNAS. The Extracellular segment spans residues 1 to 45; sequence MATVTYPSSEPTTLDPGNASSTWPLDTTLGNTSAGASLTGLAVSG. 2 N-linked (GlcNAc...) asparagine glycosylation sites follow: asparagine 18 and asparagine 31. The helical transmembrane segment at 46–71 threads the bilayer; the sequence is ILISLVYLVVCVVGLLGNSLVIYVVL. At 72–81 the chain is on the cytoplasmic side; it reads RHTSSPSVTS. The helical transmembrane segment at 82 to 103 threads the bilayer; sequence VYILNLALADELFMLGLPFLAA. At 104–118 the chain is on the extracellular side; sequence QNALSYWPFGSLMCR. Cysteine 117 and cysteine 192 are joined by a disulfide. Residues 119-140 traverse the membrane as a helical segment; the sequence is LVMAVDGINQFTSIFCLTVMSV. Residues 141 to 162 are Cytoplasmic-facing; that stretch reads DRYLAVVHPTRSARWRTAPVAR. A helical membrane pass occupies residues 163–182; it reads TVSAAVWVASAVVVLPVVVF. The Extracellular segment spans residues 183–206; the sequence is SGVPRGMSTCHMQWPEPAAAWRTA. The helical transmembrane segment at 207-232 threads the bilayer; it reads FIIYTAALGFFGPLLVICLCYLLIVV. Over 233–266 the chain is Cytoplasmic; the sequence is KVRSTTRRVRAPSCQWVQAPACQRRRRSERRVTR. Residues 267-288 form a helical membrane-spanning segment; it reads MVVAVVALFVLCWMPFYLLNIV. Topologically, residues 289-302 are extracellular; it reads NVVCPLPEEPAFFG. Residues 303–325 traverse the membrane as a helical segment; sequence LYFLVVALPYANSCANPILYGFL. The Cytoplasmic portion of the chain corresponds to 326 to 428; the sequence is SYRFKQGFRR…GDKASTLSHL (103 aa). Phosphoserine occurs at positions 341, 346, and 351. The tract at residues 344–428 is disordered; it reads IRSQEPGSGP…GDKASTLSHL (85 aa). Threonine 357 is subject to Phosphothreonine. Residues 357 to 370 are compositionally biased toward acidic residues; the sequence is TEEEEDEEEEERRE. The span at 385–412 shows a compositional bias: polar residues; sequence RLSQIAQAGTSGQQPRPCTGTAKEQQLL.

It belongs to the G-protein coupled receptor 1 family. Homodimer and heterodimer with SSTR2. Heterodimerization with SSTR2 inactivates SSTR3 receptor function. In terms of processing, phosphorylated. Phosphorylation increases upon somatostatin binding. In the brain, primarily observed in the forebrain. Moderate levels found throughout laminae 2-6 of the neocortex and allocortex, and high levels in lamina 2 of the piriform and entorhinal cortices. High levels also present in the cornu ammonis fields of the hippocampus. In the amygdala, highly expressed in the nucleus of the lateral olfactory tract with expression also detected in the rostral portions of the basal magnocellular and lateral nuclei. In the diencephalon, moderate levels observed in the ventromedial and arcuate nuclei of the hypothalamus. In the midbrain, moderate levels found in the lateral portion of the substantia nigra pars reticulata.

It localises to the cell membrane. Receptor for somatostatin-14 and -28. This receptor is coupled via pertussis toxin sensitive G proteins to inhibition of adenylyl cyclase. The polypeptide is Somatostatin receptor type 3 (Sstr3) (Mus musculus (Mouse)).